Here is a 296-residue protein sequence, read N- to C-terminus: Glycine--tRNA ligase alpha subunit (296 aa).

It belongs to the class-II aminoacyl-tRNA synthetase family. Tetramer of two alpha and two beta subunits.

The protein localises to the cytoplasm. It catalyses the reaction tRNA(Gly) + glycine + ATP = glycyl-tRNA(Gly) + AMP + diphosphate. The polypeptide is Glycine--tRNA ligase alpha subunit (Parasynechococcus marenigrum (strain WH8102)).